We begin with the raw amino-acid sequence, 122 residues long: Flagellar protein FliT (122 aa).

Residues 1–50 (MTSTVEFINRWQRIALLSQSLLELAQRGEWDLLLQQEVSYLQSIETVMEK) form a required for homodimerization region. The interval 60 to 98 (IQDMVAGYIKQTLDNEQLLKGLLQQRLDELSSLIGQSTR) is fliD binding.

This sequence belongs to the FliT family. Homodimer. Interacts with FliD and FlhC.

It is found in the cytoplasm. The protein localises to the cytosol. In terms of biological role, dual-function protein that regulates the transcription of class 2 flagellar operons and that also acts as an export chaperone for the filament-capping protein FliD. As a transcriptional regulator, acts as an anti-FlhDC factor; it directly binds FlhC, thus inhibiting the binding of the FlhC/FlhD complex to class 2 promoters, resulting in decreased expression of class 2 flagellar operons. As a chaperone, effects FliD transition to the membrane by preventing its premature polymerization, and by directing it to the export apparatus. This chain is Flagellar protein FliT, found in Salmonella schwarzengrund (strain CVM19633).